The primary structure comprises 160 residues: 6,7-dimethyl-8-ribityllumazine synthase (160 aa).

5-amino-6-(D-ribitylamino)uracil-binding positions include F22, A57–E59, and A81–I83. G86–T87 contributes to the (2S)-2-hydroxy-3-oxobutyl phosphate binding site. The Proton donor role is filled by H89. F114 is a binding site for 5-amino-6-(D-ribitylamino)uracil. Residue R128 participates in (2S)-2-hydroxy-3-oxobutyl phosphate binding.

It belongs to the DMRL synthase family. As to quaternary structure, forms an icosahedral capsid composed of 60 subunits, arranged as a dodecamer of pentamers.

It catalyses the reaction (2S)-2-hydroxy-3-oxobutyl phosphate + 5-amino-6-(D-ribitylamino)uracil = 6,7-dimethyl-8-(1-D-ribityl)lumazine + phosphate + 2 H2O + H(+). It functions in the pathway cofactor biosynthesis; riboflavin biosynthesis; riboflavin from 2-hydroxy-3-oxobutyl phosphate and 5-amino-6-(D-ribitylamino)uracil: step 1/2. Catalyzes the formation of 6,7-dimethyl-8-ribityllumazine by condensation of 5-amino-6-(D-ribitylamino)uracil with 3,4-dihydroxy-2-butanone 4-phosphate. This is the penultimate step in the biosynthesis of riboflavin. The sequence is that of 6,7-dimethyl-8-ribityllumazine synthase from Shewanella sediminis (strain HAW-EB3).